Consider the following 431-residue polypeptide: Beta-lactamase hydrolase-like protein (431 aa).

Zn(2+) is bound by residues His212, His214, and His286. Residue Asp309 participates in substrate binding.

This sequence belongs to the metallo-beta-lactamase superfamily. Requires Zn(2+) as cofactor.

In terms of biological role, could play a role in cell adherence or biofilm development. This is Beta-lactamase hydrolase-like protein from Agrobacterium fabrum (strain C58 / ATCC 33970) (Agrobacterium tumefaciens (strain C58)).